The following is a 526-amino-acid chain: Lysine--tRNA ligase (526 aa).

A 'HIGH' region motif is present at residues 30–38 (PSGYVHIGN). Residues aspartate 95, cysteine 99, histidine 100, histidine 106, cysteine 177, and cysteine 199 each coordinate Zn(2+). Positions 280–284 (KMSGS) match the 'KMSKS' region motif.

Belongs to the class-I aminoacyl-tRNA synthetase family. The cofactor is Zn(2+).

It localises to the cytoplasm. The enzyme catalyses tRNA(Lys) + L-lysine + ATP = L-lysyl-tRNA(Lys) + AMP + diphosphate. The polypeptide is Lysine--tRNA ligase (lysS) (Thermococcus kodakarensis (strain ATCC BAA-918 / JCM 12380 / KOD1) (Pyrococcus kodakaraensis (strain KOD1))).